The sequence spans 248 residues: PF03932 family protein CutC (248 aa).

Belongs to the CutC family. As to quaternary structure, homodimer.

The protein localises to the cytoplasm. The polypeptide is PF03932 family protein CutC (Escherichia coli O17:K52:H18 (strain UMN026 / ExPEC)).